A 427-amino-acid chain; its full sequence is UDP-N-acetylglucosamine 1-carboxyvinyltransferase (427 aa).

K22 to N23 lines the phosphoenolpyruvate pocket. R99 is a UDP-N-acetyl-alpha-D-glucosamine binding site. The active-site Proton donor is the C123. Position 123 is a 2-(S-cysteinyl)pyruvic acid O-phosphothioketal (C123). Residues R128–L132, D313, and I335 each bind UDP-N-acetyl-alpha-D-glucosamine.

It belongs to the EPSP synthase family. MurA subfamily.

It is found in the cytoplasm. It carries out the reaction phosphoenolpyruvate + UDP-N-acetyl-alpha-D-glucosamine = UDP-N-acetyl-3-O-(1-carboxyvinyl)-alpha-D-glucosamine + phosphate. It functions in the pathway cell wall biogenesis; peptidoglycan biosynthesis. Its function is as follows. Cell wall formation. Adds enolpyruvyl to UDP-N-acetylglucosamine. The sequence is that of UDP-N-acetylglucosamine 1-carboxyvinyltransferase from Sphingopyxis alaskensis (strain DSM 13593 / LMG 18877 / RB2256) (Sphingomonas alaskensis).